Here is a 325-residue protein sequence, read N- to C-terminus: GPI-linked NAD(P)(+)--arginine ADP-ribosyltransferase 1 (325 aa).

Residues 1-22 form the signal peptide; the sequence is MKIPAMMSLLLVSVGLRDGVQV. Intrachain disulfides connect Cys53-Cys272 and Cys169-Cys219. An N-linked (GlcNAc...) asparagine glycan is attached at Asn65. In terms of domain architecture, TR mART core spans 73–268; that stretch reads KVYADGWAQA…IYLRALGKRS (196 aa). NAD(+) is bound by residues Tyr117 and Arg174. Active-site residues include Arg174 and Ser197. Ser228 is a binding site for NAD(+). Glu235 is an active-site residue. N-linked (GlcNAc...) asparagine glycosylation is present at Asn248. Ser290 carries the GPI-anchor amidated serine lipid modification. A propeptide spans 291–325 (removed in mature form); sequence APGSISASCSLLLLLLFLVLSALPENPGLQQLTRC.

It belongs to the Arg-specific ADP-ribosyltransferase family. Abundantly expressed in cardiac and skeletal muscle. Low levels also found in lung.

Its subcellular location is the sarcoplasmic reticulum membrane. It carries out the reaction L-arginyl-[protein] + NAD(+) = N(omega)-(ADP-D-ribosyl)-L-arginyl-[protein] + nicotinamide + H(+). Has ADP-ribosyltransferase activity toward GLP1R. The protein is GPI-linked NAD(P)(+)--arginine ADP-ribosyltransferase 1 (Art1) of Mus musculus (Mouse).